The following is a 685-amino-acid chain: Probable inactive leucine-rich repeat receptor-like protein kinase At1g66830 (685 aa).

The first 21 residues, methionine 1–serine 21, serve as a signal peptide directing secretion. Topologically, residues leucine 22–cysteine 305 are extracellular. Residues asparagine 38 and asparagine 48 are each glycosylated (N-linked (GlcNAc...) asparagine). LRR repeat units lie at residues aspartate 65 to leucine 89, leucine 90 to leucine 113, glycine 115 to serine 136, leucine 137 to cysteine 161, lysine 162 to asparagine 185, leucine 186 to leucine 210, asparagine 212 to asparagine 234, and leucine 235 to asparagine 260. Residue asparagine 151 is glycosylated (N-linked (GlcNAc...) asparagine). An N-linked (GlcNAc...) asparagine glycan is attached at asparagine 193. Asparagine 247 is a glycosylation site (N-linked (GlcNAc...) asparagine). A helical transmembrane segment spans residues isoleucine 306 to isoleucine 326. The Cytoplasmic portion of the chain corresponds to tyrosine 327 to isoleucine 685. Residues lysine 397–valine 682 form the Protein kinase domain. Serine 399, serine 480, and serine 590 each carry phosphoserine.

The protein belongs to the protein kinase superfamily. Ser/Thr protein kinase family.

The protein localises to the cell membrane. This chain is Probable inactive leucine-rich repeat receptor-like protein kinase At1g66830, found in Arabidopsis thaliana (Mouse-ear cress).